A 595-amino-acid chain; its full sequence is Outer dynein arm-docking complex subunit 3 (595 aa).

The interval 1-69 is disordered; the sequence is MTSPLCRAAS…RGAGKPSVHS (69 aa). 2 coiled-coil regions span residues 94–327 and 385–473; these read WNIK…REHL and FAQL…ASKL.

In terms of assembly, component of the outer dynein arm-docking complex along with ODAD1, ODAD2, ODAD4 and CLXN. Interacts with ODAD1. Interacts with PIERCE1 and PIERCE2; the interactions link the outer dynein arms docking complex (ODA-DC) to the internal microtubule inner proteins (MIP) in cilium axoneme.

It localises to the cytoplasm. The protein resides in the cytoskeleton. The protein localises to the cilium basal body. It is found in the microtubule organizing center. Its subcellular location is the centrosome. It localises to the centriole. The protein resides in the cilium axoneme. Its function is as follows. Component of the outer dynein arm-docking complex (ODA-DC) that mediates outer dynein arms (ODA) binding onto the doublet microtubule. Involved in mediating assembly of both ODAs and their axonemal docking complex onto ciliary microtubules. In Homo sapiens (Human), this protein is Outer dynein arm-docking complex subunit 3.